Consider the following 222-residue polypeptide: uncharacterized protein (222 aa).

Gly2 is lipidated: N-myristoyl glycine; by host.

The protein belongs to the mimivirus R683/R861 family.

This is an uncharacterized protein from Acanthamoeba polyphaga mimivirus (APMV).